The primary structure comprises 341 residues: Retinol dehydrogenase 10-B (341 aa).

The helical; Signal-anchor transmembrane segment at 3–23 (IVLEFFLVTFRVLWAFVLAAA) threads the bilayer. 40–64 (LITGAGSGLGRLFALEFARRRAQLV) contributes to the NADP(+) binding site. A substrate-binding site is contributed by serine 197. Catalysis depends on tyrosine 210, which acts as the Proton acceptor.

It belongs to the short-chain dehydrogenases/reductases (SDR) family.

It localises to the microsome membrane. Its subcellular location is the endoplasmic reticulum membrane. It catalyses the reaction all-trans-retinol + NADP(+) = all-trans-retinal + NADPH + H(+). It participates in cofactor metabolism; retinol metabolism. Retinol dehydrogenase with a clear preference for NADP. Converts all-trans-retinol to all-trans-retinal. Has no detectable activity towards 11-cis-retinol, 9-cis-retinol and 13-cis-retinol. This chain is Retinol dehydrogenase 10-B (rdh10-b), found in Xenopus laevis (African clawed frog).